Consider the following 448-residue polypeptide: MATVFLGTVVHTKSFSEFESFEGGFLAVDDAGKIIGVGQDYHAWASSNPAHAKGLTEVHLSDYQFLMPGFVDCHIHAPQFAQLGLGLDMPLLDWLNTYTFPLEAKFSNHQYAQQVYQGVVEATLRCGTTLASYFATNHLESTLTLAREAVRQGQRALIGKVCSNCNSPEFYVETAEESVSATLAFVEGVRKLGSPMVMPTITPRFALSCSKELLKSLGDIAKRFDLHIQSHISENLEEIEMVKGIFKTSYAGAYDEAGLLTNKTVLAHGVHLEDDEVALLKVRGCSVAHCPTSNTMLSSGLCDVQRLVSGGVSVGLGTDVSGGNSVSIQDVLLRALDVSKHLDFFKKQNIRGTGVSKTQDFNYHQLKYKQALYLATLGGAKALSLDHLTGNFALGKDFDALLVDVSVVDKPLRRLSVDELVEKFIYTGSDRNIVEVFVAGKRIKQGYQ.

The Zn(2+) site is built by H74 and H76. Residues 76 to 79 (HAPQ), 204 to 205 (RF), 231 to 234 (HISE), and D319 each bind substrate. 2 residues coordinate Zn(2+): H231 and D319.

It belongs to the metallo-dependent hydrolases superfamily. ATZ/TRZ family. Requires Zn(2+) as cofactor.

The catalysed reaction is guanine + H2O + H(+) = xanthine + NH4(+). It functions in the pathway purine metabolism; guanine degradation; xanthine from guanine: step 1/1. Strongly inhibited by p-chloromercuribenzoate (PCMB). Potassium cyanide (KCN) strongly inhibits activity towards 7,8-dihydropterin but has almost no effect on activity towards guanine. Pterin inhibits activity towards guanine but has little effect on activity towards 7,8-dihydropterin. Functionally, catalyzes the hydrolytic deamination of guanine, producing xanthine and ammonia. Also has 7,8-dihydropterin deaminase activity, which plays a role in synthesis of the red eye pigment aurodrosopterin. The chain is Guanine deaminase from Drosophila melanogaster (Fruit fly).